The following is a 287-amino-acid chain: Pyridoxal 5'-phosphate synthase subunit PdxS (287 aa).

D-ribose 5-phosphate is bound at residue D21. The active-site Schiff-base intermediate with D-ribose 5-phosphate is the K78. D-ribose 5-phosphate is bound at residue G150. R162 lines the D-glyceraldehyde 3-phosphate pocket. Residues G211 and 232–233 (GS) contribute to the D-ribose 5-phosphate site.

This sequence belongs to the PdxS/SNZ family. In the presence of PdxT, forms a dodecamer of heterodimers.

It carries out the reaction aldehydo-D-ribose 5-phosphate + D-glyceraldehyde 3-phosphate + L-glutamine = pyridoxal 5'-phosphate + L-glutamate + phosphate + 3 H2O + H(+). The protein operates within cofactor biosynthesis; pyridoxal 5'-phosphate biosynthesis. In terms of biological role, catalyzes the formation of pyridoxal 5'-phosphate from ribose 5-phosphate (RBP), glyceraldehyde 3-phosphate (G3P) and ammonia. The ammonia is provided by the PdxT subunit. Can also use ribulose 5-phosphate and dihydroxyacetone phosphate as substrates, resulting from enzyme-catalyzed isomerization of RBP and G3P, respectively. The polypeptide is Pyridoxal 5'-phosphate synthase subunit PdxS (Tropheryma whipplei (strain TW08/27) (Whipple's bacillus)).